A 398-amino-acid chain; its full sequence is uncharacterized protein (398 aa).

The 233-residue stretch at 21 to 253 (TNFGPTNLII…WQLTSTSEPE (233 aa)) folds into the Radical SAM core domain. 3 residues coordinate [4Fe-4S] cluster: Cys-37, Cys-41, and Cys-44.

This sequence belongs to the radical SAM superfamily. Anaerobic sulfatase-maturating enzyme family. [4Fe-4S] cluster serves as cofactor.

This is an uncharacterized protein from Synechocystis sp. (strain ATCC 27184 / PCC 6803 / Kazusa).